Here is a 650-residue protein sequence, read N- to C-terminus: Acetyl-coenzyme A synthetase (650 aa).

Residues 191 to 194 (RGGR), threonine 311, and asparagine 335 contribute to the CoA site. ATP-binding positions include 387-389 (GEP), 411-416 (DTWWQT), aspartate 501, and arginine 516. Serine 524 is a CoA binding site. Arginine 527 lines the ATP pocket. Residues valine 538, histidine 540, and isoleucine 543 each coordinate Mg(2+). Arginine 585 contacts CoA. The residue at position 610 (lysine 610) is an N6-acetyllysine.

Belongs to the ATP-dependent AMP-binding enzyme family. It depends on Mg(2+) as a cofactor. In terms of processing, acetylated. Deacetylation by the SIR2-homolog deacetylase activates the enzyme.

The catalysed reaction is acetate + ATP + CoA = acetyl-CoA + AMP + diphosphate. Catalyzes the conversion of acetate into acetyl-CoA (AcCoA), an essential intermediate at the junction of anabolic and catabolic pathways. AcsA undergoes a two-step reaction. In the first half reaction, AcsA combines acetate with ATP to form acetyl-adenylate (AcAMP) intermediate. In the second half reaction, it can then transfer the acetyl group from AcAMP to the sulfhydryl group of CoA, forming the product AcCoA. The sequence is that of Acetyl-coenzyme A synthetase from Vibrio parahaemolyticus serotype O3:K6 (strain RIMD 2210633).